Consider the following 865-residue polypeptide: Alanine--tRNA ligase (865 aa).

Zn(2+) contacts are provided by histidine 568, histidine 572, cysteine 670, and histidine 674.

The protein belongs to the class-II aminoacyl-tRNA synthetase family. Zn(2+) is required as a cofactor.

It is found in the cytoplasm. The enzyme catalyses tRNA(Ala) + L-alanine + ATP = L-alanyl-tRNA(Ala) + AMP + diphosphate. In terms of biological role, catalyzes the attachment of alanine to tRNA(Ala) in a two-step reaction: alanine is first activated by ATP to form Ala-AMP and then transferred to the acceptor end of tRNA(Ala). Also edits incorrectly charged Ser-tRNA(Ala) and Gly-tRNA(Ala) via its editing domain. This is Alanine--tRNA ligase from Vibrio campbellii (strain ATCC BAA-1116).